Here is a 711-residue protein sequence, read N- to C-terminus: K(+)-insensitive pyrophosphate-energized proton pump (711 aa).

The next 5 membrane-spanning stretches (helical) occupy residues 7-27, 58-78, 85-105, 145-165, and 179-199; these read LIYGVIVIAALVIIGLIKFIF, IASLALIVAVIIVVANYYGHL, ALSFALHVGFAFITGAFCSAL, LAVTALSLFGVATLFLAYGGL, and IVGFGFGASFVALFAQLGGGI. Lys-202 contacts substrate. Residues Asp-205, Asp-209, and Asp-235 each contribute to the Mg(2+) site. Transmembrane regions (helical) follow at residues 251-271, 274-294, 311-331, 343-363, 403-423, and 431-451; these read TAAENIGAMILGVGLYPIFGW, ILFPLVARAIGIIASIIGIFF, GYFVTTVVNLIALFFAVKVML, YLLLYGAVVTGVILSYIFVFL, LPVIFISAAIYIAYKLGEMAI, and LYGTAIATMGMLSTTAYILAM. Asp-459 lines the Mg(2+) pocket. 4 helical membrane-spanning segments follow: residues 495–515, 535–555, 602–622, and 624–644; these read YAIGSAALATFLLFSAYLDEV, EVFIGAFIGAMIVYLFSSTAI, EMVIPGLIVVVTPILVGVILG, and EAAAAFLMIGTISGVILALYL. Ca(2+) contacts are provided by Asp-652, Asp-678, and Asp-682. Lys-685 provides a ligand contact to substrate. Residues 690 to 710 traverse the membrane as a helical segment; that stretch reads PSLHVLIKLISTITLVFVALF.

Belongs to the H(+)-translocating pyrophosphatase (TC 3.A.10) family. K(+)-insensitive subfamily. In terms of assembly, homodimer. The cofactor is Mg(2+).

Its subcellular location is the cell membrane. It catalyses the reaction diphosphate + H2O + H(+)(in) = 2 phosphate + 2 H(+)(out). Functionally, proton pump that utilizes the energy of pyrophosphate hydrolysis as the driving force for proton movement across the membrane. Generates a proton motive force. In Caldanaerobacter subterraneus subsp. tengcongensis (strain DSM 15242 / JCM 11007 / NBRC 100824 / MB4) (Thermoanaerobacter tengcongensis), this protein is K(+)-insensitive pyrophosphate-energized proton pump.